A 656-amino-acid polypeptide reads, in one-letter code: Protein EMBRYO SAC DEVELOPMENT ARREST 30 (656 aa).

A helical; Signal-anchor for type II membrane protein membrane pass occupies residues 9–29; the sequence is WIALFVLILSMGSLVVHLSMT. Asn119 carries N-linked (GlcNAc...) asparagine glycosylation. Positions 381–426 are disordered; sequence LSELVGPETPLPENTYKMPPRKSDKQLKEEWNKAGPRPRPLPPPPD. Basic and acidic residues predominate over residues 401-412; the sequence is RKSDKQLKEEWN. The segment covering 417–426 has biased composition (pro residues); it reads RPRPLPPPPD. Asn444, Asn522, Asn534, and Asn544 each carry an N-linked (GlcNAc...) asparagine glycan. A disordered region spans residues 631–656; it reads SETEEEFAKSKVASAFDQDEEWDPND. Residues 647–656 show a composition bias toward acidic residues; sequence DQDEEWDPND.

Belongs to the glycosyltransferase GT106 family.

The protein localises to the membrane. It participates in glycan metabolism. The chain is Protein EMBRYO SAC DEVELOPMENT ARREST 30 from Arabidopsis thaliana (Mouse-ear cress).